Consider the following 237-residue polypeptide: Glucosamine-6-phosphate deaminase (237 aa).

Residue Asp67 is the Proton acceptor; for enolization step of the active site. Asn136 functions as the For ring-opening step in the catalytic mechanism. His138 serves as the catalytic Proton acceptor; for ring-opening step. Residue Glu143 is the For ring-opening step of the active site.

The protein belongs to the glucosamine/galactosamine-6-phosphate isomerase family. NagB subfamily.

The enzyme catalyses alpha-D-glucosamine 6-phosphate + H2O = beta-D-fructose 6-phosphate + NH4(+). It functions in the pathway amino-sugar metabolism; N-acetylneuraminate degradation; D-fructose 6-phosphate from N-acetylneuraminate: step 5/5. Catalyzes the reversible isomerization-deamination of glucosamine 6-phosphate (GlcN6P) to form fructose 6-phosphate (Fru6P) and ammonium ion. The protein is Glucosamine-6-phosphate deaminase of Lysinibacillus sphaericus (strain C3-41).